The sequence spans 153 residues: UPF0260 protein YcgN (153 aa).

The protein belongs to the UPF0260 family.

The protein is UPF0260 protein YcgN of Salmonella agona (strain SL483).